Reading from the N-terminus, the 73-residue chain is Probable movement protein p8 (73 aa).

A compositionally biased stretch (polar residues) spans 1 to 12 (MSTVETPAQDTL). The segment at 1 to 48 (MSTVETPAQDTLATKEPNKTGAKDRQQARSARLSVAAGAGRTALSQRD) is disordered. Residues 16–27 (EPNKTGAKDRQQ) show a composition bias toward basic and acidic residues.

Belongs to the carmovirus/necrovirus/panicovirus movement protein p8 family.

It localises to the host cell wall. Its function is as follows. Cell-to-cell movement. The sequence is that of Probable movement protein p8 from Muhlenbergia (Blackwell switchgrass).